The primary structure comprises 363 residues: Flagellar P-ring protein 2 (363 aa).

An N-terminal signal peptide occupies residues 1–20 (MKLRTCCISLMLLLALPLQA).

Belongs to the FlgI family. The basal body constitutes a major portion of the flagellar organelle and consists of four rings (L,P,S, and M) mounted on a central rod.

The protein localises to the periplasm. It is found in the bacterial flagellum basal body. Assembles around the rod to form the L-ring and probably protects the motor/basal body from shearing forces during rotation. The sequence is that of Flagellar P-ring protein 2 from Photobacterium profundum (strain SS9).